The following is a 245-amino-acid chain: MNVTLLIPARYGSSRFPGKPLAPINGKPMIQHVYERASLAKGLTNIYVATDDERIKSAVEGFGGKVVMTSPDAASGTDRINDAINQLGLKDDDLVINLQGDQPLIDPTSIEQVISLFERHPGEFEMATLGYEIVNKAELDDPMHVKMVFDNDYYALYFSRARIPFGRDTKDYPVYKHLGVYAYTRRFVQAFAALPLGRLEDLEKLEQLRALEHGHKIKVAISAFDSIEVDTPEDIRKCEQRLAVD.

The protein belongs to the KdsB family.

It localises to the cytoplasm. The enzyme catalyses 8-amino-3,8-dideoxy-alpha-D-manno-octulosonate + CTP = CMP-8-amino-3,8-dideoxy-alpha-D-manno-oct-2-ulosonate + diphosphate. It participates in bacterial outer membrane biogenesis; lipopolysaccharide biosynthesis. Its function is as follows. Activates KDO8N (a required 8-carbon sugar) for incorporation into bacterial lipopolysaccharide in the Shewanella genus. In Shewanella sp. (strain MR-7), this protein is 8-amino-3,8-dideoxy-manno-octulosonate cytidylyltransferase.